The chain runs to 319 residues: MTEKALRLGTRRSKLAMAQSGQVADAVSQVTGRPVELVEITTYGDTSREHLAQIGGTGVFVAALRDALLRGEVDFAVHSLKDLPTAQHEGLVVAAIPEREDPRDVVVARDARKLTDLPRGARVGTGAPRRMAQLNAYARTHGMEIETVPIRGNVDTRIGYVRSGELDAVVLAAAGLNRVGRIDEVTDFLSVDTVLPAPGQGALAVECAADNASLIAALAELDDPFTRAAVTAERSLLAALEAGCSAPVGALADLLADGQTVKEMRLRGVVGTTDGSTLVQLSTTGPVPETHEAALALGGELAAEMLAQGAAGLMGERAQ.

Cysteine 244 carries the post-translational modification S-(dipyrrolylmethanemethyl)cysteine.

Belongs to the HMBS family. Monomer. The cofactor is dipyrromethane.

The enzyme catalyses 4 porphobilinogen + H2O = hydroxymethylbilane + 4 NH4(+). It functions in the pathway porphyrin-containing compound metabolism; protoporphyrin-IX biosynthesis; coproporphyrinogen-III from 5-aminolevulinate: step 2/4. In terms of biological role, tetrapolymerization of the monopyrrole PBG into the hydroxymethylbilane pre-uroporphyrinogen in several discrete steps. In Streptomyces coelicolor (strain ATCC BAA-471 / A3(2) / M145), this protein is Porphobilinogen deaminase 1 (hemC1).